The chain runs to 758 residues: UPF0313 protein CV_1738 (758 aa).

Residues 377 to 642 (AWEMIKYSVN…VDVVRDGYRR (266 aa)) enclose the Radical SAM core domain. [4Fe-4S] cluster-binding residues include Cys-391, Cys-395, and Cys-398. The tract at residues 698–758 (GAPMNRGKSP…KPGGKTSRSR (61 aa)) is disordered. The segment covering 727 to 737 (RGQGGQGGRPG) has biased composition (gly residues).

Belongs to the UPF0313 family. The cofactor is [4Fe-4S] cluster.

This is UPF0313 protein CV_1738 from Chromobacterium violaceum (strain ATCC 12472 / DSM 30191 / JCM 1249 / CCUG 213 / NBRC 12614 / NCIMB 9131 / NCTC 9757 / MK).